The primary structure comprises 266 residues: Small ribosomal subunit protein uS2 (266 aa).

This sequence belongs to the universal ribosomal protein uS2 family.

This Paramagnetospirillum magneticum (strain ATCC 700264 / AMB-1) (Magnetospirillum magneticum) protein is Small ribosomal subunit protein uS2.